An 89-amino-acid polypeptide reads, in one-letter code: Small ribosomal subunit protein uS15 (89 aa).

The protein belongs to the universal ribosomal protein uS15 family. Part of the 30S ribosomal subunit. Forms a bridge to the 50S subunit in the 70S ribosome, contacting the 23S rRNA.

In terms of biological role, one of the primary rRNA binding proteins, it binds directly to 16S rRNA where it helps nucleate assembly of the platform of the 30S subunit by binding and bridging several RNA helices of the 16S rRNA. Functionally, forms an intersubunit bridge (bridge B4) with the 23S rRNA of the 50S subunit in the ribosome. The polypeptide is Small ribosomal subunit protein uS15 (Pseudomonas fluorescens (strain ATCC BAA-477 / NRRL B-23932 / Pf-5)).